The primary structure comprises 191 residues: Prostaglandin-H2 D-isomerase (191 aa).

Positions 1-24 (MAALHTLWMGLVLLGVLGVLQTRA) are cleaved as a signal peptide. Gln25 is subject to Pyrrolidone carboxylic acid. An N-linked (GlcNAc...) asparagine glycan is attached at Asn51. The Nucleophile role is filled by Cys65. Asn78 carries N-linked (GlcNAc...) asparagine glycosylation. A disulfide bond links Cys89 and Cys186.

It belongs to the calycin superfamily. Lipocalin family. As to quaternary structure, monomer. In terms of processing, N- and O-glycosylated. Both N-glycosylation recognition sites are almost quantitatively occupied by N-glycans of the biantennary complex type, with a considerable proportion of structures bearing a bisecting GlcNAc. N-glycan at Asn-78: dHex1Hex5HexNAc4. Agalacto structure as well as sialylated and nonsialylated oligosaccharides bearing alpha2-3- and/or alpha2-6-linked NeuNAc are present.

It localises to the rough endoplasmic reticulum. The protein resides in the nucleus membrane. The protein localises to the golgi apparatus. It is found in the cytoplasm. Its subcellular location is the perinuclear region. It localises to the secreted. The enzyme catalyses prostaglandin H2 = prostaglandin D2. In terms of biological role, catalyzes the conversion of PGH2 to PGD2, a prostaglandin involved in smooth muscle contraction/relaxation and a potent inhibitor of platelet aggregation. Involved in a variety of CNS functions, such as sedation, NREM sleep and PGE2-induced allodynia, and may have an anti-apoptotic role in oligodendrocytes. Binds small non-substrate lipophilic molecules, including biliverdin, bilirubin, retinal, retinoic acid and thyroid hormone, and may act as a scavenger for harmful hydrophobic molecules and as a secretory retinoid and thyroid hormone transporter. Possibly involved in development and maintenance of the blood-brain, blood-retina, blood-aqueous humor and blood-testis barrier. It is likely to play important roles in both maturation and maintenance of the central nervous system and male reproductive system. Involved in PLA2G3-dependent maturation of mast cells. PLA2G3 is secreted by immature mast cells and acts on nearby fibroblasts upstream to PTDGS to synthesize PGD2, which in turn promotes mast cell maturation and degranulation via PTGDR. This chain is Prostaglandin-H2 D-isomerase (PTGDS), found in Felis catus (Cat).